The chain runs to 494 residues: Probable cytosol aminopeptidase (494 aa).

Lys-260 and Asp-265 together coordinate Mn(2+). Lys-272 is a catalytic residue. 3 residues coordinate Mn(2+): Asp-283, Asp-342, and Glu-344. Arg-346 is a catalytic residue.

This sequence belongs to the peptidase M17 family. The cofactor is Mn(2+).

The protein resides in the cytoplasm. The catalysed reaction is Release of an N-terminal amino acid, Xaa-|-Yaa-, in which Xaa is preferably Leu, but may be other amino acids including Pro although not Arg or Lys, and Yaa may be Pro. Amino acid amides and methyl esters are also readily hydrolyzed, but rates on arylamides are exceedingly low.. It catalyses the reaction Release of an N-terminal amino acid, preferentially leucine, but not glutamic or aspartic acids.. Presumably involved in the processing and regular turnover of intracellular proteins. Catalyzes the removal of unsubstituted N-terminal amino acids from various peptides. This chain is Probable cytosol aminopeptidase, found in Bacillus mycoides (strain KBAB4) (Bacillus weihenstephanensis).